The primary structure comprises 324 residues: Interleukin-12 subunit beta (324 aa).

The signal sequence occupies residues 1-22 (MHLQQLVVSWFSLVWLASPIVA). Positions 23–106 (IWELEKNVYV…LSQSLLLLHK (84 aa)) constitute an Ig-like C2-type domain. Residues Cys-50 and Cys-90 are joined by a disulfide bond. 3 N-linked (GlcNAc...) asparagine glycosylation sites follow: Asn-125, Asn-135, and Asn-218. The 92-residue stretch at 233–324 (PPKNLQLNPL…WSEWASVSCN (92 aa)) folds into the Fibronectin type-III domain.

The protein belongs to the IL-12B family. Heterodimer with IL12A; disulfide-linked. The heterodimer is known as interleukin IL-12. Heterodimer with IL23A; disulfide-linked. The heterodimer is known as interleukin IL-23. Also secreted as a monomer. Interacts with NBR1; this interaction promotes IL-12 secretion.

The protein localises to the secreted. Functionally, cytokine that can act as a growth factor for activated T and NK cells, enhance the lytic activity of NK/lymphokine-activated killer cells, and stimulate the production of IFN-gamma by resting PBMC. Its function is as follows. Associates with IL23A to form the IL-23 interleukin, a heterodimeric cytokine which functions in innate and adaptive immunity. IL-23 may constitute with IL-17 an acute response to infection in peripheral tissues. IL-23 binds to a heterodimeric receptor complex composed of IL12RB1 and IL23R, activates the Jak-Stat signaling cascade, stimulates memory rather than naive T-cells and promotes production of pro-inflammatory cytokines. IL-23 induces autoimmune inflammation and thus may be responsible for autoimmune inflammatory diseases and may be important for tumorigenesis. In Sus scrofa (Pig), this protein is Interleukin-12 subunit beta (IL12B).